We begin with the raw amino-acid sequence, 351 residues long: Methylthioribose-1-phosphate isomerase (351 aa).

Substrate contacts are provided by residues 51–53 (RGA), R94, and Q199. Catalysis depends on D240, which acts as the Proton donor. 250–251 (NK) lines the substrate pocket.

This sequence belongs to the EIF-2B alpha/beta/delta subunits family. MtnA subfamily. Homodimer.

The enzyme catalyses 5-(methylsulfanyl)-alpha-D-ribose 1-phosphate = 5-(methylsulfanyl)-D-ribulose 1-phosphate. It functions in the pathway amino-acid biosynthesis; L-methionine biosynthesis via salvage pathway; L-methionine from S-methyl-5-thio-alpha-D-ribose 1-phosphate: step 1/6. Functionally, catalyzes the interconversion of methylthioribose-1-phosphate (MTR-1-P) into methylthioribulose-1-phosphate (MTRu-1-P). The polypeptide is Methylthioribose-1-phosphate isomerase (Bacillus anthracis).